The following is a 484-amino-acid chain: Sialidase-4 (484 aa).

The FRIP motif signature appears at 22-25 (YRVP). Substrate-binding residues include arginine 23 and arginine 43. Catalysis depends on proton acceptor residues aspartate 47 and aspartate 48. The stretch at 127-138 (VASRDAGLSWGS) is one BNR 1 repeat. Substrate contacts are provided by tyrosine 177 and tyrosine 179. The stretch at 200–211 (FYSDDHGRTWRC) is one BNR 2 repeat. Glutamate 222 and arginine 242 together coordinate substrate. Residues 251 to 262 (ALSTDEGTSFLP) form a BNR 3 repeat. Residues 284–357 (PAPAPNRPRD…GPRPGVSGDV (74 aa)) are disordered. A compositionally biased stretch (low complexity) spans 336–345 (RLQPRGDGPR). Residue arginine 389 coordinates substrate. Residue tyrosine 419 is the Nucleophile of the active site. Residue glutamate 440 is part of the active site.

It belongs to the glycosyl hydrolase 33 family. Post-translationally, N-glycosylated. As to expression, predominant form in liver. Also expressed in brain, kidney and colon. In terms of tissue distribution, highly expressed in brain and at lower levels in kidney and liver.

The protein resides in the cell membrane. It localises to the endoplasmic reticulum membrane. It is found in the microsome membrane. The protein localises to the mitochondrion membrane. Its subcellular location is the cell projection. The protein resides in the neuron projection. It localises to the mitochondrion inner membrane. It is found in the mitochondrion outer membrane. The protein localises to the lysosome lumen. The enzyme catalyses Hydrolysis of alpha-(2-&gt;3)-, alpha-(2-&gt;6)-, alpha-(2-&gt;8)- glycosidic linkages of terminal sialic acid residues in oligosaccharides, glycoproteins, glycolipids, colominic acid and synthetic substrates.. It catalyses the reaction a ganglioside GM3 + H2O = a beta-D-galactosyl-(1-&gt;4)-beta-D-glucosyl-(1&lt;-&gt;1)-ceramide + N-acetylneuraminate. It carries out the reaction a ganglioside GM3 (d18:1(4E)) + H2O = a beta-D-Gal-(1-&gt;4)-beta-D-Glc-(1&lt;-&gt;1)-Cer(d18:1(4E)) + N-acetylneuraminate. The catalysed reaction is a ganglioside GM2 + H2O = a ganglioside GA2 + N-acetylneuraminate. The enzyme catalyses a ganglioside GM2 (d18:1(4E)) + H2O = a ganglioside GA2 (d18:1(4E)) + N-acetylneuraminate. It catalyses the reaction a ganglioside GD1a + H2O = a ganglioside GM1 + N-acetylneuraminate. It carries out the reaction a ganglioside GD1a (d18:1(4E)) + H2O = a ganglioside GM1 (d18:1(4E)) + N-acetylneuraminate. The catalysed reaction is a ganglioside GD3 + H2O = a ganglioside GM3 + N-acetylneuraminate. The enzyme catalyses a ganglioside GD3 (d18:1(4E)) + H2O = a ganglioside GM3 (d18:1(4E)) + N-acetylneuraminate. Functionally, exo-alpha-sialidase that catalyzes the hydrolytic cleavage of the terminal sialic acid (N-acetylneuraminic acid, Neu5Ac) of a glycan moiety in the catabolism of glycolipids, glycoproteins and oligosacharides. Efficiently hydrolyzes gangliosides including alpha-(2-&gt;3)-sialylated GD1a and GM3 and alpha-(2-&gt;8)-sialylated GD3. Hydrolyzes poly-alpha-(2-&gt;8)-sialylated neural cell adhesion molecule NCAM1 likely at growth cones, suppressing neurite outgrowth in hippocampal neurons. May desialylate sialyl Lewis A and X antigens at the cell surface, down-regulating these glycan epitopes recognized by SELE/E selectin in the initiation of cell adhesion and extravasation. Has sialidase activity toward mucin, fetuin and sialyllactose. The chain is Sialidase-4 (NEU4) from Homo sapiens (Human).